The chain runs to 125 residues: Ribosome-binding factor A (125 aa).

It belongs to the RbfA family. Monomer. Binds 30S ribosomal subunits, but not 50S ribosomal subunits or 70S ribosomes.

The protein resides in the cytoplasm. Its function is as follows. One of several proteins that assist in the late maturation steps of the functional core of the 30S ribosomal subunit. Associates with free 30S ribosomal subunits (but not with 30S subunits that are part of 70S ribosomes or polysomes). Required for efficient processing of 16S rRNA. May interact with the 5'-terminal helix region of 16S rRNA. The sequence is that of Ribosome-binding factor A from Carboxydothermus hydrogenoformans (strain ATCC BAA-161 / DSM 6008 / Z-2901).